The following is a 209-amino-acid chain: Guanylyl cyclase-activating protein 3 (209 aa).

The N-myristoyl glycine moiety is linked to residue Gly-2. Asn-3 carries the deamidated asparagine modification. EF-hand domains are found at residues 15–50 (PTQETHVWYRTFMMEYPSGLQTLHEFKTLLGLQGLN), 52–87 (KANKHIDQVYNTFDTNKDGFVDFLEFIAAVNLIMQE), 88–123 (KMEQKLKWYFKLYDADGNGSIDKNELLDMFMAVQAL), and 130–165 (SPEEFINLVFHKIDINNDGELTLEEFINGMAKDQDL). 14 residues coordinate Ca(2+): Asp-65, Asn-67, Asp-69, Glu-76, Asp-101, Asp-103, Asn-105, Ser-107, Glu-112, Asp-143, Asn-145, Asp-147, Glu-149, and Glu-154. Residues 187 to 209 (QPDMETDSSKSPDKAGLGKVKMK) are disordered.

Retina.

Functionally, stimulates guanylyl cyclase 1 (GC1) and GC2 when free calcium ions concentration is low and inhibits guanylyl cyclases when free calcium ions concentration is elevated. This Ca(2+)-sensitive regulation of guanylyl cyclase (GC) is a key event in recovery of the dark state of rod photoreceptors following light exposure. The polypeptide is Guanylyl cyclase-activating protein 3 (GUCA1C) (Homo sapiens (Human)).